The primary structure comprises 420 residues: Tol-Pal system protein TolB (420 aa).

A signal peptide spans 1–21 (MKLFVHLVLFISLFIPYFTKA).

It belongs to the TolB family. As to quaternary structure, the Tol-Pal system is composed of five core proteins: the inner membrane proteins TolA, TolQ and TolR, the periplasmic protein TolB and the outer membrane protein Pal. They form a network linking the inner and outer membranes and the peptidoglycan layer.

Its subcellular location is the periplasm. Part of the Tol-Pal system, which plays a role in outer membrane invagination during cell division and is important for maintaining outer membrane integrity. This is Tol-Pal system protein TolB from Wolbachia sp. subsp. Drosophila simulans (strain wRi).